We begin with the raw amino-acid sequence, 156 residues long: MNINATLIGQSVAFFIFVLFCMKFVWPPVIAALQERQKKIADGLDAANRAARDLELAHEKAGQQLREAKAQAAEIVEQAKKRANQIVDEARDQARTEGERLKAQAQAEIEQELNSVKDALRAQVGALAVTGAEKILGASIDANAHEQLVSKLAAEI.

Residues 12-32 traverse the membrane as a helical segment; sequence VAFFIFVLFCMKFVWPPVIAA.

This sequence belongs to the ATPase B chain family. F-type ATPases have 2 components, F(1) - the catalytic core - and F(0) - the membrane proton channel. F(1) has five subunits: alpha(3), beta(3), gamma(1), delta(1), epsilon(1). F(0) has three main subunits: a(1), b(2) and c(10-14). The alpha and beta chains form an alternating ring which encloses part of the gamma chain. F(1) is attached to F(0) by a central stalk formed by the gamma and epsilon chains, while a peripheral stalk is formed by the delta and b chains.

It localises to the cell inner membrane. Its function is as follows. F(1)F(0) ATP synthase produces ATP from ADP in the presence of a proton or sodium gradient. F-type ATPases consist of two structural domains, F(1) containing the extramembraneous catalytic core and F(0) containing the membrane proton channel, linked together by a central stalk and a peripheral stalk. During catalysis, ATP synthesis in the catalytic domain of F(1) is coupled via a rotary mechanism of the central stalk subunits to proton translocation. In terms of biological role, component of the F(0) channel, it forms part of the peripheral stalk, linking F(1) to F(0). The chain is ATP synthase subunit b from Pseudomonas aeruginosa (strain UCBPP-PA14).